The sequence spans 529 residues: Tyrosinase (529 aa).

The signal sequence occupies residues 1-18 (MLLAVLYCLLWSFQTSAG). The Lumenal, melanosome segment spans residues 19–476 (HFPRACVSSK…YLEQASRIWS (458 aa)). N-linked (GlcNAc...) asparagine glycans are attached at residues Asn-86, Asn-111, and Asn-161. Residues His-180, His-202, and His-211 each contribute to the Cu cation site. A glycan (N-linked (GlcNAc...) asparagine) is linked at Asn-230. The disordered stretch occupies residues 287–313 (SLCNGTPEGPLQRNPGNHDKSRTPRLP). The N-linked (GlcNAc...) asparagine glycan is linked to Asn-337. Residues His-363 and His-367 each contribute to the Cu cation site. N-linked (GlcNAc...) asparagine glycosylation is present at Asn-371. His-390 is a Cu cation binding site. The helical transmembrane segment at 477–497 (WLLGAAMVGAVLTALLAGLVS) threads the bilayer. Over 498–529 (LLCRHKRKQLPEEKQPLLMEKEDYHSLYQSHL) the chain is Cytoplasmic.

It belongs to the tyrosinase family. Forms an OPN3-dependent complex with DCT in response to blue light in melanocytes. Cu(2+) serves as cofactor. Glycosylated.

It localises to the melanosome membrane. The protein localises to the melanosome. The enzyme catalyses 2 L-dopa + O2 = 2 L-dopaquinone + 2 H2O. It catalyses the reaction L-tyrosine + O2 = L-dopaquinone + H2O. It carries out the reaction 2 5,6-dihydroxyindole-2-carboxylate + O2 = 2 indole-5,6-quinone-2-carboxylate + 2 H2O. In terms of biological role, this is a copper-containing oxidase that functions in the formation of pigments such as melanins and other polyphenolic compounds. Catalyzes the initial and rate limiting step in the cascade of reactions leading to melanin production from tyrosine. In addition to hydroxylating tyrosine to DOPA (3,4-dihydroxyphenylalanine), also catalyzes the oxidation of DOPA to DOPA-quinone, and possibly the oxidation of DHI (5,6-dihydroxyindole) to indole-5,6 quinone. The chain is Tyrosinase (TYR) from Gorilla gorilla gorilla (Western lowland gorilla).